The following is a 299-amino-acid chain: MSSIKIECVLPENCQCGESPVWEEASNSLLFVDIPAKKVCRWDSLTKQVQRVTVDAPVSSVALHRSGDYVATIGTKFCALNWKEQSAVVLATVDNDKKNNRFNDGKVDPAGRYFAGTMAEETAPAVLERHQGALYSLFPDHHVKKYFDQVDISNGLDWSLDHKIFYYIDSLSYSVDAFDYDLQTGQISNRRSVYKLEKEEQIPDGMCIDAEGKLWVACYNGGRVIRLDPVTGKRLHTVKLPVDKTTSCCFGGKNYSEMYVTCARDGMDPEGLLRQPEAGGIFKITGLGVKGIAPYSYAG.

Glutamate 18 contributes to the a divalent metal cation binding site. Substrate is bound by residues arginine 101, asparagine 103, and glutamate 121. The residue at position 144 (lysine 144) is an N6-succinyllysine. The a divalent metal cation site is built by asparagine 154 and aspartate 204. Residue aspartate 204 is the Proton donor/acceptor of the active site. N6-succinyllysine occurs at positions 244 and 253.

This sequence belongs to the SMP-30/CGR1 family. Monomer. Zn(2+) serves as cofactor. Requires Mn(2+) as cofactor. The cofactor is Ca(2+). Mg(2+) is required as a cofactor.

The protein localises to the cytoplasm. The enzyme catalyses D-glucono-1,5-lactone + H2O = D-gluconate + H(+). In terms of biological role, gluconolactonase with low activity towards other sugar lactones, including gulonolactone and galactonolactone. Can also hydrolyze diisopropyl phosphorofluoridate and phenylacetate (in vitro). Calcium-binding protein. Modulates Ca(2+) signaling, and Ca(2+)-dependent cellular processes and enzyme activities. The sequence is that of Regucalcin (RGN) from Pongo abelii (Sumatran orangutan).